The chain runs to 1093 residues: NACHT, LRR and PYD domains-containing protein 14 (1093 aa).

The Pyrin domain occupies 1–97 (MADSSSSSFF…CERAKEEINW (97 aa)). The disordered stretch occupies residues 102–121 (IGPDDAKAGETQEDQEAVLG). The NACHT domain occupies 177-499 (QIVVLQGAAG…MFYMLKGSWE (323 aa)). ATP is bound at residue 183 to 190 (GAAGVGKT). 11 LRR repeats span residues 730–750 (NLMH…KSLC), 759–780 (KLQT…NISN), 787–807 (SLIF…QLLC), 816–836 (YLER…EYLS), 844–864 (RLTH…KLMS), 873–894 (TLKS…YLST), 901–921 (SLTH…KLLC), 930–951 (NLQD…DLAS), 958–978 (NLRS…KILC), 987–1008 (NIQR…DLSS), and 1015–1035 (RLIK…VKLY).

It belongs to the NLRP family. As to expression, testis-specific.

It is found in the cytoplasm. In terms of biological role, may be involved in inflammation and spermatogenesis. The protein is NACHT, LRR and PYD domains-containing protein 14 (NLRP14) of Homo sapiens (Human).